We begin with the raw amino-acid sequence, 704 residues long: Chloride intracellular channel protein 6 (704 aa).

A compositionally biased stretch (low complexity) spans 1–13 (MAEAAEPEGVAPG). The interval 1 to 446 (MAEAAEPEGV…EDGEASEPRA (446 aa)) is disordered. Residues 39 to 48 (EGPEGSEGAE) show a composition bias toward acidic residues. S44 bears the Phosphoserine mark. Positions 67–83 (RGPEAEARGTRGAHGET) are enriched in basic and acidic residues. Low complexity predominate over residues 90 to 100 (PEGAEVPQGGE). Residues 121-147 (PRGEAQREPEDSAAPERQEEAEQRPEV) are compositionally biased toward basic and acidic residues. Repeat copies occupy residues 157–166 (GDSVDAEGPL), 167–176 (GDNIEAEGPA), 177–186 (GDSVEAEGRV), 187–196 (GDSVDAEGPA), 197–206 (GDSVDAEGPL), 207–216 (GDNIQAEGPA), 217–226 (GDSVDAEGRV), 227–236 (GDSVDAEGPA), 237–246 (GDSVDAEGRV), 247–256 (GDSVEAGDPA), 257–266 (GDGVEAGVPA), 267–276 (GDSVEAEGPA), and 277–286 (GDSMDAEGPA). The segment at 157 to 282 (GDSVDAEGPL…EGPAGDSMDA (126 aa)) is 13 X 10 AA tandem repeat of G-D-[SNG]-[VIM]-[DEQ]-A-[EAG]-[GDVE]-[PRG]-[LAVP]. Positions 295 to 306 (EPQQSGDGSLSP) are enriched in polar residues. Basic and acidic residues-rich tracts occupy residues 350–360 (ARADAGEDRVG) and 371–385 (EERR…REEE). A phosphoserine mark is found at S397 and S442. A compositionally biased stretch (basic and acidic residues) spans 434–446 (GRREDGEASEPRA). The G-site signature appears at 487 to 490 (CPFS). A helical membrane pass occupies residues 489–509 (FSQRLFMILWLKGVIFNVTTV). The 149-residue stretch at 556–704 (YPKLGTQHPE…AYSDVAKRMK (149 aa)) folds into the GST C-terminal domain.

Belongs to the chloride channel CLIC family. Monomer (soluble state). Interacts with dopamine receptors DRD2, DRD3 and DRD4. In terms of processing, phosphorylated. In terms of tissue distribution, expressed in brain, placenta, pancreas, liver, lung, heart, kidney, liver, spleen, soleus muscle, and brown fat.

The protein resides in the cytoplasm. It localises to the cell membrane. It catalyses the reaction chloride(in) = chloride(out). Its activity is regulated as follows. Channel activity is redox- and pH-regulated. Inhibited by IAA-94. Functionally, in the soluble state, catalyzes glutaredoxin-like thiol disulfide exchange reactions with reduced glutathione as electron donor. Can insert into membranes and form voltage-dependent chloride-selective channels. The channel opens upon membrane depolarization at positive voltages and closes at negative membrane voltages. May play a critical role in water-secreting cells, possibly through the regulation of chloride ion transport. This Homo sapiens (Human) protein is Chloride intracellular channel protein 6.